Here is a 293-residue protein sequence, read N- to C-terminus: Nitrogenase iron protein (293 aa).

Residue 10–17 (GKGGIGKS) coordinates ATP. Cysteine 98 contacts [4Fe-4S] cluster. ADP-ribosylarginine; by dinitrogenase reductase ADP-ribosyltransferase is present on arginine 101. Cysteine 133 provides a ligand contact to [4Fe-4S] cluster.

Belongs to the NifH/BchL/ChlL family. In terms of assembly, homodimer. [4Fe-4S] cluster is required as a cofactor. In terms of processing, the reversible ADP-ribosylation of Arg-101 inactivates the nitrogenase reductase and regulates nitrogenase activity.

It catalyses the reaction N2 + 8 reduced [2Fe-2S]-[ferredoxin] + 16 ATP + 16 H2O = H2 + 8 oxidized [2Fe-2S]-[ferredoxin] + 2 NH4(+) + 16 ADP + 16 phosphate + 6 H(+). In terms of biological role, the key enzymatic reactions in nitrogen fixation are catalyzed by the nitrogenase complex, which has 2 components: the iron protein and the molybdenum-iron protein. The chain is Nitrogenase iron protein from Pectobacterium atrosepticum (strain SCRI 1043 / ATCC BAA-672) (Erwinia carotovora subsp. atroseptica).